The sequence spans 119 residues: Ribonuclease P protein component (119 aa).

The protein belongs to the RnpA family. Consists of a catalytic RNA component (M1 or rnpB) and a protein subunit.

The enzyme catalyses Endonucleolytic cleavage of RNA, removing 5'-extranucleotides from tRNA precursor.. Functionally, RNaseP catalyzes the removal of the 5'-leader sequence from pre-tRNA to produce the mature 5'-terminus. It can also cleave other RNA substrates such as 4.5S RNA. The protein component plays an auxiliary but essential role in vivo by binding to the 5'-leader sequence and broadening the substrate specificity of the ribozyme. The polypeptide is Ribonuclease P protein component (Escherichia fergusonii (strain ATCC 35469 / DSM 13698 / CCUG 18766 / IAM 14443 / JCM 21226 / LMG 7866 / NBRC 102419 / NCTC 12128 / CDC 0568-73)).